Consider the following 29-residue polypeptide: Cytochrome b6-f complex subunit 8 (29 aa).

Residues 3-23 (IDVLGWVALLVVFTWSIAMVV) form a helical membrane-spanning segment.

This sequence belongs to the PetN family. The 4 large subunits of the cytochrome b6-f complex are cytochrome b6, subunit IV (17 kDa polypeptide, PetD), cytochrome f and the Rieske protein, while the 4 small subunits are PetG, PetL, PetM and PetN. The complex functions as a dimer.

It is found in the cellular thylakoid membrane. Component of the cytochrome b6-f complex, which mediates electron transfer between photosystem II (PSII) and photosystem I (PSI), cyclic electron flow around PSI, and state transitions. The polypeptide is Cytochrome b6-f complex subunit 8 (Mastigocladus laminosus (Fischerella sp.)).